Consider the following 352-residue polypeptide: Probable RNA methyltransferase Mpe_A3613 (352 aa).

Residue glutamate 88 is the Proton acceptor of the active site. Residues 91-317 (LLPRDGLCVS…TKLRRSAGQD (227 aa)) form the Radical SAM core domain. Cysteine 98 and cysteine 322 form a disulfide bridge. [4Fe-4S] cluster-binding residues include cysteine 105, cysteine 109, and cysteine 112. S-adenosyl-L-methionine contacts are provided by residues 150-151 (GE), serine 180, 203-205 (SLH), and asparagine 279. Cysteine 322 serves as the catalytic S-methylcysteine intermediate.

The protein belongs to the radical SAM superfamily. RlmN family. [4Fe-4S] cluster serves as cofactor.

It localises to the cytoplasm. The polypeptide is Probable RNA methyltransferase Mpe_A3613 (Methylibium petroleiphilum (strain ATCC BAA-1232 / LMG 22953 / PM1)).